The primary structure comprises 486 residues: MATFKDACYHYKRLNKLNHAVLKLGVNDAWRPSPPTKYKGWCLDCCQHTDLTYCRGCSIYHVCQWCNQYGRCFLDDEPHLLRMRTFKNDITKEDLANLIDMYNVLFPVNQKIVNKFINNTKQHKCRNELVPQWYNHLLMPITLQSLSIELSGDIYYIFGYYDDMKNVNQTPFSFVNLIDIYDRLLLDDVNFNRMSFLPLVLQQEYAIRYFSKSRFISEEKRQINHSHFSINILENLHNPNFKIQITRNCSTMFGKWNEACTLVKDIGTYFEILKTSHVEFYDVSPRCRMFTQHKLKAVSKVIKPNYATSNHRALATEVYNCRWCSVNTSFIVWNDFRLRNICDNVLNFIRALVKSNTRIGHCSSQEQIHSYIRDVFDVCDENKWNTSVSGIFNCLESVELDGVHYVLLNHEVNWDVANVLIQNIGKIPQILTLNDVITALHSMIYDWFDIRYMRNTPTTTFTVDKLRQLCARRKIADYDSGLSDVE.

The RNA-binding stretch occupies residues 1–81 (MATFKDACYH…CFLDDEPHLL (81 aa)). Positions 42–79 (CLDCCQHTDLTYCRGCSIYHVCQWCNQYGRCFLDDEPH) are zinc-binding domain. Residues 82 to 176 (RMRTFKNDIT…VNQTPFSFVN (95 aa)) are important for cytoskeleton localization. The interaction with host IRF3 stretch occupies residues 317–486 (EVYNCRWCSV…DYDSGLSDVE (170 aa)). Positions 479–483 (DSGLS) match the IKBKB-like degron (ILD) motif motif. The pLxIS motif signature appears at 480–483 (SGLS).

Belongs to the rotavirus NSP1 family. In terms of assembly, interacts (via C-terminus) with host IRF3; this interaction leads to IRF3 degradation. Interacts with host IRF7; this interaction leads to IRF7 degradation. Interacts with host CUL1 and CUL3. Interacts with host BTRC. The C-terminal region is phosphorylated by host CKII/CSNK2A1. Phosphorylation of the DSGXS motif is essential for host NF-kappa-B inhibition.

Its subcellular location is the host cytoplasm. The protein localises to the host cytoskeleton. Functionally, plays a role in the inhibition of host innate immunity by inducing the degradation of key host factors required to activate interferon production such as IRF3, IRF5 or IRF7. Associates with components of cullin RING ligases (CRLs) including CUL1 or CUL3, which are essential multisubunit ubiquitination complexes, to modulate their activities. Recognizes the host NF-kappa-B regulator BTRC through the presence of a DSGXS motif in the C-terminal substrate recognition domain. This is Non-structural protein 1 from Rotavirus A (strain RVA/Pig/Mexico/YM/1983/G11P9[7]) (RV-A).